The following is a 263-amino-acid chain: Phosphatidylglycerol--prolipoprotein diacylglyceryl transferase (263 aa).

4 helical membrane passes run 7–27 (IFSI…LGIV), 50–70 (LLTA…VLIY), 85–105 (TWKG…AVII), and 112–132 (IPIF…LFLG). Position 133 (Arg133) interacts with a 1,2-diacyl-sn-glycero-3-phospho-(1'-sn-glycerol). 3 helical membrane-spanning segments follow: residues 169–189 (LYEA…LFFL), 197–217 (GTLT…VEFF), and 233–253 (MGQL…LSAL).

Belongs to the Lgt family.

It localises to the cell membrane. It catalyses the reaction L-cysteinyl-[prolipoprotein] + a 1,2-diacyl-sn-glycero-3-phospho-(1'-sn-glycerol) = an S-1,2-diacyl-sn-glyceryl-L-cysteinyl-[prolipoprotein] + sn-glycerol 1-phosphate + H(+). It functions in the pathway protein modification; lipoprotein biosynthesis (diacylglyceryl transfer). Catalyzes the transfer of the diacylglyceryl group from phosphatidylglycerol to the sulfhydryl group of the N-terminal cysteine of a prolipoprotein, the first step in the formation of mature lipoproteins. The protein is Phosphatidylglycerol--prolipoprotein diacylglyceryl transferase of Wolbachia sp. subsp. Brugia malayi (strain TRS).